A 133-amino-acid polypeptide reads, in one-letter code: Small ribosomal subunit protein uS19 (133 aa).

It belongs to the universal ribosomal protein uS19 family.

In terms of biological role, protein S19 forms a complex with S13 that binds strongly to the 16S ribosomal RNA. In Archaeoglobus fulgidus (strain ATCC 49558 / DSM 4304 / JCM 9628 / NBRC 100126 / VC-16), this protein is Small ribosomal subunit protein uS19 (rps19).